The chain runs to 224 residues: 3-dehydroquinate dehydratase (224 aa).

3-dehydroquinate-binding positions include 35-37 (EFR) and Arg65. Catalysis depends on His120, which acts as the Proton donor/acceptor. Residue Lys146 is the Schiff-base intermediate with substrate of the active site. 3-dehydroquinate-binding residues include Arg183, Thr202, and Gln206.

It belongs to the type-I 3-dehydroquinase family. As to quaternary structure, homodimer.

It carries out the reaction 3-dehydroquinate = 3-dehydroshikimate + H2O. The protein operates within metabolic intermediate biosynthesis; chorismate biosynthesis; chorismate from D-erythrose 4-phosphate and phosphoenolpyruvate: step 3/7. Its function is as follows. Involved in the third step of the chorismate pathway, which leads to the biosynthesis of aromatic amino acids. Catalyzes the cis-dehydration of 3-dehydroquinate (DHQ) and introduces the first double bond of the aromatic ring to yield 3-dehydroshikimate. The chain is 3-dehydroquinate dehydratase from Methanobrevibacter smithii (strain ATCC 35061 / DSM 861 / OCM 144 / PS).